The sequence spans 686 residues: MTPASRSACRWALLLLAVLWPQQRAAGSGIFQLRLQEFVNQRGMLANGQSCEPGCRTFFRICLKHFQATFSEGPCTFGNVSTPVLGTNSFVVRDKNSGSGRNPLQLPFNFTWPGTFSLNIQAWHTPGDDLRPETSPGNSLISQIIIQGSLAVGKIWRTDEQNDTLTRLSYSYRVICSDNYYGESCSRLCKKRDDHFGHYECQPDGSLSCLPGWTGKYCDQPICLSGCHEQNGYCSKPDECICRPGWQGRLCNECIPHNGCRHGTCSIPWQCACDEGWGGLFCDQDLNYCTHHSPCKNGSTCSNSGPKGYTCTCLPGYTGEHCELGLSKCASNPCRNGGSCKDQENSYHCLCPPGYYGQHCEHSTLTCADSPCFNGGSCRERNQGSSYACECPPNFTGSNCEKKVDRCTSNPCANGGQCQNRGPSRTCRCRPGFTGTHCELHISDCARSPCAHGGTCHDLENGPVCTCPAGFSGRRCEVRITHDACASGPCFNGATCYTGLSPNNFVCNCPYGFVGSRCEFPVGLPPSFPWVAVSLGVGLVVLLVLLVMVVVAVRQLRLRRPDDESREAMNNLSDFQKDNLIPAAQLKNTNQKKELEVDCGLDKSNCGKLQNHTLDYNLAPGLLGRGGMPGKYPHSDKSLGEKVPLRLHSEKPECRISAICSPRDSMYQSVCLISEERNECVIATEV.

A signal peptide spans 1-26; the sequence is MTPASRSACRWALLLLAVLWPQQRAA. The Extracellular portion of the chain corresponds to 27–532; sequence GSGIFQLRLQ…GLPPSFPWVA (506 aa). 2 disulfide bridges follow: Cys51/Cys55 and Cys62/Cys75. N-linked (GlcNAc...) asparagine glycans are attached at residues Asn79, Asn109, and Asn162. In terms of domain architecture, DSL spans 174–218; the sequence is VICSDNYYGESCSRLCKKRDDHFGHYECQPDGSLSCLPGWTGKYC. The cysteines at positions 176 and 185 are disulfide-linked. Interaction with Notch1 stretches follow at residues 186 to 188 and 192 to 196; these read SRL and RDDHF. 26 disulfide bridges follow: Cys189–Cys201, Cys209–Cys218, Cys223–Cys234, Cys227–Cys240, Cys242–Cys251, Cys254–Cys265, Cys260–Cys271, Cys273–Cys282, Cys289–Cys301, Cys295–Cys311, Cys313–Cys322, Cys329–Cys340, Cys334–Cys349, Cys351–Cys360, Cys367–Cys378, Cys372–Cys389, Cys391–Cys400, Cys407–Cys418, Cys412–Cys427, Cys429–Cys438, Cys445–Cys456, Cys450–Cys465, Cys467–Cys476, Cys485–Cys496, Cys490–Cys507, and Cys509–Cys518. 8 consecutive EGF-like domains span residues 219–252, 253–283, 285–323, 325–361, 364–401, 403–439, 441–477, and 481–519; these read DQPI…RLCN, ECIP…LFCD, DLNY…EHCE, GLSK…QHCE, TLTC…SNCE, KVDR…THCE, HISD…RRCE, and THDA…SRCE. Asn297 carries N-linked (GlcNAc...) asparagine glycosylation. A glycan (N-linked (GlcNAc...) asparagine) is linked at Asn394. Residues 533–553 traverse the membrane as a helical segment; that stretch reads VSLGVGLVVLLVLLVMVVVAV. The Cytoplasmic portion of the chain corresponds to 554–686; the sequence is RQLRLRRPDD…RNECVIATEV (133 aa).

In terms of assembly, interacts with NOTCH4. Interacts (via N-terminal DSL and MNNL domains) with NOTCH1 (via EGF-like domains). In terms of tissue distribution, expressed in vascular endothelium. Expressed in retina at least during embryogenesis.

The protein resides in the cell membrane. Functionally, involved in the Notch signaling pathway as Notch ligand. Activates NOTCH1 and NOTCH4. Involved in angiogenesis; negatively regulates endothelial cell proliferation and migration and angiogenic sprouting. Essential for retinal progenitor proliferation. Required for suppressing rod fates in late retinal progenitors as well as for proper generation of other retinal cell types. During spinal cord neurogenesis, inhibits V2a interneuron fate. This chain is Delta-like protein 4 (Dll4), found in Mus musculus (Mouse).